The primary structure comprises 558 residues: D-xylose-proton symporter-like 3, chloroplastic (558 aa).

The N-terminal 31 residues, 1 to 31 (MAFAVSVQSHFAIRALKRDHFKNPSPRTFCS), are a transit peptide targeting the chloroplast. A run of 12 helical transmembrane segments spans residues 98–118 (VILP…DIGA), 146–166 (LVVS…YGVA), 175–195 (LIIA…APDL), 197–217 (ILLV…HGAP), 238–258 (LFIV…IDVV), 264–284 (MYGF…SLPA), 359–379 (ALTI…PSVL), 400–420 (VSVI…AKVD), 426–446 (PLLI…SAYY), 449–469 (LGGF…CYQI), 491–511 (GISL…FAFS), and 522–542 (LFLL…LVVP).

The protein belongs to the major facilitator superfamily. Sugar transporter (TC 2.A.1.1) family.

The protein localises to the plastid. The protein resides in the chloroplast membrane. The sequence is that of D-xylose-proton symporter-like 3, chloroplastic from Arabidopsis thaliana (Mouse-ear cress).